The following is a 662-amino-acid chain: Serine/threonine-protein kinase PTK1/STK1 (662 aa).

The interval 35 to 119 (GNKLKKKASL…SSTSRNLSNS (85 aa)) is disordered. Residues 50 to 60 (STSTNDSESSS) show a composition bias toward low complexity. 2 stretches are compositionally biased toward polar residues: residues 61 to 91 (PKLP…SAST) and 98 to 119 (GSST…LSNS). The Protein kinase domain maps to 196 to 503 (DDENKTIGWG…IDDLFEDPWF (308 aa)). ATP-binding positions include 202 to 210 (IGWGGSCEV) and Lys226. Asp329 functions as the Proton acceptor in the catalytic mechanism. Positions 605-631 (TLTLSEEPPATPAPSAPSAPSARVRGH) are disordered.

Belongs to the protein kinase superfamily. Ser/Thr protein kinase family.

The enzyme catalyses L-seryl-[protein] + ATP = O-phospho-L-seryl-[protein] + ADP + H(+). It carries out the reaction L-threonyl-[protein] + ATP = O-phospho-L-threonyl-[protein] + ADP + H(+). Its function is as follows. Essential determinant for low-affinity spermidine transport. The protein is Serine/threonine-protein kinase PTK1/STK1 (PTK1) of Saccharomyces cerevisiae (strain ATCC 204508 / S288c) (Baker's yeast).